Here is a 42-residue protein sequence, read N- to C-terminus: Envelope protein P10 (42 aa).

Residues 20–40 (TTAAKIAVVYALVGLVGGLLL) form a helical membrane-spanning segment.

It is found in the virion membrane. Involved in cell lysis. In Pseudomonas savastanoi pv. phaseolicola (Pseudomonas syringae pv. phaseolicola), this protein is Envelope protein P10 (P10).